Here is a 461-residue protein sequence, read N- to C-terminus: tRNA modification GTPase MnmE (461 aa).

Residues lysine 32, glutamate 89, and lysine 128 each coordinate (6S)-5-formyl-5,6,7,8-tetrahydrofolate. Residues 224–387 enclose the TrmE-type G domain; it reads GHALSIVGKP…LSQKISEFFP (164 aa). A K(+)-binding site is contributed by asparagine 234. GTP-binding positions include 234–239, 253–259, and 278–281; these read NAGKSS, SDIKGTT, and DTAG. Residue serine 238 participates in Mg(2+) binding. Positions 253, 255, and 258 each coordinate K(+). Threonine 259 is a Mg(2+) binding site. Lysine 461 lines the (6S)-5-formyl-5,6,7,8-tetrahydrofolate pocket.

Belongs to the TRAFAC class TrmE-Era-EngA-EngB-Septin-like GTPase superfamily. TrmE GTPase family. Homodimer. Heterotetramer of two MnmE and two MnmG subunits. K(+) serves as cofactor.

Its subcellular location is the cytoplasm. Its function is as follows. Exhibits a very high intrinsic GTPase hydrolysis rate. Involved in the addition of a carboxymethylaminomethyl (cmnm) group at the wobble position (U34) of certain tRNAs, forming tRNA-cmnm(5)s(2)U34. In Helicobacter pylori (strain J99 / ATCC 700824) (Campylobacter pylori J99), this protein is tRNA modification GTPase MnmE.